Reading from the N-terminus, the 214-residue chain is Scytalone dehydratase-like protein mdpB (214 aa).

2 residues coordinate substrate: Y40 and Y60. Residues H95 and H120 contribute to the active site.

The protein belongs to the scytalone dehydratase family.

It functions in the pathway secondary metabolite biosynthesis. In terms of biological role, scytalone dehydratase-like protein; part of the gene cluster that mediates the biosynthesis of monodictyphenone, a prenyl xanthone derivative. The pathway begins with the synthesis of atrochrysone thioester by the polyketide synthase (PKS) mdpG. The atrochrysone carboxyl ACP thioesterase mdpF then breaks the thioester bond and releases the atrochrysone carboxylic acid from mdpG. The atrochrysone carboxylic acid is then converted to atrochrysone which is further transformed into emodin anthrone. The next step is performed by the anthrone oxygenase mdpH that catalyzes the oxidation of emodinanthrone to emodin. Emodin is further modified to yield monodictyphenone via several steps involving mdpB, mdpC mdpJ, mdpK and mdpL. These enzymes with xptA, xptB and xptC are also proposed to be involved in the synthesis of shamixanthone from emodin. Especially, direct reduction of emodin by the short chain dehydrogenase mdpC followed by dehydration catalyzed by the scytalone dehydratase-like protein mdpB gives loss of oxygen and formation of chrysophanol intermediate in two simple steps. In Emericella nidulans (strain FGSC A4 / ATCC 38163 / CBS 112.46 / NRRL 194 / M139) (Aspergillus nidulans), this protein is Scytalone dehydratase-like protein mdpB.